The following is a 195-amino-acid chain: Large ribosomal subunit protein bL27c (195 aa).

The transit peptide at 1–60 (MASMAFTLVGAFKGMSLSSPCHSSSSASFLRADRVSLSVGGGVGMGVPMTMPVRRLTIQM) directs the protein to the chloroplast.

The protein belongs to the bacterial ribosomal protein bL27 family. As to quaternary structure, part of the 50S ribosomal subunit.

It is found in the plastid. The protein resides in the chloroplast. In Oryza sativa subsp. japonica (Rice), this protein is Large ribosomal subunit protein bL27c (RPL27).